The sequence spans 327 residues: MEELLIENSHRFTIFPIQHPECWNWYKKLESLTWTAQEVDMCKDIDDWEAMPKSQREFYKQILAFFVVADEIVIENLLTNFMREIKVKEVLYFYTMQAAQECVHSEAYSIQVKTLIPDEKEQQRIFSGIEKHPIIKKMAQWVRQWMDPTKNSLGERLVGFAAVEGILFQNHFVAIQFLKEQNIMPGLVSYNEFISRDEGVHCSFACFLISNYVYNIPEERIIHKILKEAVELVDEFINYAFDKARGRVPGFSKEMLFQYIRYFTDNLCFMMQCKSIYKVGNPFPQMTKFFLNEVEKTNFFELRPTQYQNCVKDDAFAFKLFLNDDDF.

Fe cation-binding residues include Asp-70, Glu-101, and His-104. Tyr-108 is an active-site residue. Glu-164, Glu-198, and His-201 together coordinate Fe cation.

Belongs to the ribonucleoside diphosphate reductase small chain family. As to quaternary structure, heterotetramer composed of a homodimer of the large subunit (R1) and a homodimer of the small subunit (R2). Larger multisubunit protein complex are also active, composed of (R1)n(R2)n. It depends on Fe cation as a cofactor.

It carries out the reaction a 2'-deoxyribonucleoside 5'-diphosphate + [thioredoxin]-disulfide + H2O = a ribonucleoside 5'-diphosphate + [thioredoxin]-dithiol. Ribonucleoside-diphosphate reductase holoenzyme provides the precursors necessary for viral DNA synthesis. Allows virus growth in non-dividing cells. Catalyzes the biosynthesis of deoxyribonucleotides from the corresponding ribonucleotides. The sequence is that of Ribonucleoside-diphosphate reductase small chain from African swine fever virus (isolate Tick/South Africa/Pretoriuskop Pr4/1996) (ASFV).